Consider the following 483-residue polypeptide: Glutamyl-tRNA(Gln) amidotransferase subunit A (483 aa).

Active-site charge relay system residues include lysine 76 and serine 151. Serine 175 serves as the catalytic Acyl-ester intermediate.

It belongs to the amidase family. GatA subfamily. In terms of assembly, heterotrimer of A, B and C subunits.

It catalyses the reaction L-glutamyl-tRNA(Gln) + L-glutamine + ATP + H2O = L-glutaminyl-tRNA(Gln) + L-glutamate + ADP + phosphate + H(+). In terms of biological role, allows the formation of correctly charged Gln-tRNA(Gln) through the transamidation of misacylated Glu-tRNA(Gln) in organisms which lack glutaminyl-tRNA synthetase. The reaction takes place in the presence of glutamine and ATP through an activated gamma-phospho-Glu-tRNA(Gln). This is Glutamyl-tRNA(Gln) amidotransferase subunit A from Pseudomonas fluorescens (strain SBW25).